Consider the following 431-residue polypeptide: tRNA-2-methylthio-N(6)-dimethylallyladenosine synthase (431 aa).

Positions 4–120 (RAVYIKTFGC…IENIIENQVS (117 aa)) constitute an MTTase N-terminal domain. Positions 13, 49, 83, 154, 158, and 161 each coordinate [4Fe-4S] cluster. Residues 140-367 (RKDCVKAWVN…LKLQDEITER (228 aa)) form the Radical SAM core domain. Positions 370–430 (KRLEGKIQEV…RHSLEGDIIS (61 aa)) constitute a TRAM domain.

It belongs to the methylthiotransferase family. MiaB subfamily. As to quaternary structure, monomer. Requires [4Fe-4S] cluster as cofactor.

The protein resides in the cytoplasm. The catalysed reaction is N(6)-dimethylallyladenosine(37) in tRNA + (sulfur carrier)-SH + AH2 + 2 S-adenosyl-L-methionine = 2-methylsulfanyl-N(6)-dimethylallyladenosine(37) in tRNA + (sulfur carrier)-H + 5'-deoxyadenosine + L-methionine + A + S-adenosyl-L-homocysteine + 2 H(+). Its function is as follows. Catalyzes the methylthiolation of N6-(dimethylallyl)adenosine (i(6)A), leading to the formation of 2-methylthio-N6-(dimethylallyl)adenosine (ms(2)i(6)A) at position 37 in tRNAs that read codons beginning with uridine. The sequence is that of tRNA-2-methylthio-N(6)-dimethylallyladenosine synthase from Thermodesulfovibrio yellowstonii (strain ATCC 51303 / DSM 11347 / YP87).